The primary structure comprises 630 residues: 1,4-alpha-glucan branching enzyme GlgB (630 aa).

The active-site Nucleophile is Asp-311. Glu-362 serves as the catalytic Proton donor.

This sequence belongs to the glycosyl hydrolase 13 family. GlgB subfamily. As to quaternary structure, monomer.

It catalyses the reaction Transfers a segment of a (1-&gt;4)-alpha-D-glucan chain to a primary hydroxy group in a similar glucan chain.. It functions in the pathway glycan biosynthesis; glycogen biosynthesis. Its function is as follows. Catalyzes the formation of the alpha-1,6-glucosidic linkages in glycogen by scission of a 1,4-alpha-linked oligosaccharide from growing alpha-1,4-glucan chains and the subsequent attachment of the oligosaccharide to the alpha-1,6 position. In Aquifex aeolicus (strain VF5), this protein is 1,4-alpha-glucan branching enzyme GlgB.